Consider the following 171-residue polypeptide: Crossover junction endodeoxyribonuclease RuvC (171 aa).

Residues D7, E67, and D139 contribute to the active site. Mg(2+) is bound by residues D7, E67, and D139.

The protein belongs to the RuvC family. In terms of assembly, homodimer which binds Holliday junction (HJ) DNA. The HJ becomes 2-fold symmetrical on binding to RuvC with unstacked arms; it has a different conformation from HJ DNA in complex with RuvA. In the full resolvosome a probable DNA-RuvA(4)-RuvB(12)-RuvC(2) complex forms which resolves the HJ. Mg(2+) is required as a cofactor.

The protein localises to the cytoplasm. It carries out the reaction Endonucleolytic cleavage at a junction such as a reciprocal single-stranded crossover between two homologous DNA duplexes (Holliday junction).. Functionally, the RuvA-RuvB-RuvC complex processes Holliday junction (HJ) DNA during genetic recombination and DNA repair. Endonuclease that resolves HJ intermediates. Cleaves cruciform DNA by making single-stranded nicks across the HJ at symmetrical positions within the homologous arms, yielding a 5'-phosphate and a 3'-hydroxyl group; requires a central core of homology in the junction. The consensus cleavage sequence is 5'-(A/T)TT(C/G)-3'. Cleavage occurs on the 3'-side of the TT dinucleotide at the point of strand exchange. HJ branch migration catalyzed by RuvA-RuvB allows RuvC to scan DNA until it finds its consensus sequence, where it cleaves and resolves the cruciform DNA. The chain is Crossover junction endodeoxyribonuclease RuvC from Geotalea uraniireducens (strain Rf4) (Geobacter uraniireducens).